The primary structure comprises 61 residues: Large ribosomal subunit protein uL30 (61 aa).

The protein belongs to the universal ribosomal protein uL30 family. Part of the 50S ribosomal subunit.

This chain is Large ribosomal subunit protein uL30, found in Thermosipho africanus (strain TCF52B).